Consider the following 118-residue polypeptide: MPTRVNDGVDADEVTFVNRFTVHGGPAEFESVFARTAAFFARQPGFVRHTLLRERDKDNSYVNIAVWTDHDAFRRALAQPGFLPHATALRALSTSEHGLFTARQTLPEGGDTTGSGHR.

The ABM domain occupies 14 to 100 (VTFVNRFTVH…ALSTSEHGLF (87 aa)).

As to quaternary structure, homodimer.

It carries out the reaction deoxynogalonate + O2 = nogalonate + H2O + H(+). Its pathway is antibiotic biosynthesis. Its function is as follows. Involved in the biosynthesis of the anthracycline (aromatic polyketide) antibiotic nogalamycin. Catalyzes the oxygenation of 12-deoxy-nogalonic acid at position 12 to yield nogalonic acid. This chain is Deoxynogalonate monooxygenase, found in Streptomyces nogalater.